Reading from the N-terminus, the 70-residue chain is Small ribosomal subunit protein bS21 (70 aa).

Belongs to the bacterial ribosomal protein bS21 family.

In Helicobacter hepaticus (strain ATCC 51449 / 3B1), this protein is Small ribosomal subunit protein bS21.